Consider the following 391-residue polypeptide: Cold-shock protein CS120 (391 aa).

Repeat copies occupy residues 9 to 31 (GEKK…DHKE), 49 to 62 (TGGA…AGTT), 72 to 94 (GEKK…DHQQ), 95 to 108 (TGGT…TGTA), 115 to 128 (TGGT…TGTA), 135 to 148 (TGGT…TGVT), 156 to 178 (GEKK…DHQQ), 179 to 192 (TGGT…TGTA), 199 to 212 (GGGT…TGMT), 220 to 242 (GEKK…DHQQ), 243 to 256 (TGGT…TGTA), 263 to 276 (GGGT…TGMT), 284 to 306 (GEKK…DHQQ), 307 to 320 (TGGA…TGTA), 327 to 340 (GGGT…AGVI), 350 to 363 (TGGT…TGTT), and 374 to 391 (GEKK…PGQH). The 6 X 23 AA approximate repeats stretch occupies residues 9 to 391 (GEKKGIMEKI…KIKDKLPGQH (383 aa)). Basic and acidic residues predominate over residues 21–33 (KLPGGHGDHKETA). A disordered region spans residues 21 to 391 (KLPGGHGDHK…KIKDKLPGQH (371 aa)). The span at 34 to 59 (GTHGHPGTATHGAPATGGAYGQQGHA) shows a compositional bias: low complexity. The interval 49–363 (TGGAYGQQGH…HGQHGHTGTT (315 aa)) is 11 X 14 AA approximate repeats. The segment covering 70–92 (HAGEKKGVMENIKDKLPGGHQDH) has biased composition (basic and acidic residues). Low complexity predominate over residues 93 to 145 (QQTGGTYGQQGHTGTATHGTPATGGTYGQQGHTGTATHGTPATGGTYGEQGHT). Basic and acidic residues predominate over residues 155–176 (TGEKKGVMENIKEKLPGGHGDH). The segment covering 177-196 (QQTGGTYGQQGHTGTATHGT) has biased composition (low complexity). The span at 219–240 (TGEKKGVMENIKDKLPGGHGDH) shows a compositional bias: basic and acidic residues. Composition is skewed to low complexity over residues 241-260 (QQTG…TQGT) and 272-282 (HTGMTGAGTHS). The segment covering 283–304 (TGEKKGVMENIKEKLPGGHSDH) has biased composition (basic and acidic residues). Composition is skewed to low complexity over residues 305 to 324 (QQTG…THGT) and 333 to 351 (QHGH…TATG). Gly residues predominate over residues 361 to 372 (GTTGTGTHGSDG). Basic and acidic residues predominate over residues 373-391 (IGEKKSLMDKIKDKLPGQH).

The protein belongs to the plant dehydrin family.

May reduce intracellular freezing damage during winter by hydrogen-bonding to the lattice of the nascent ice crystals, thus modifying the structure and/or propagation of ice crystals. The polypeptide is Cold-shock protein CS120 (CS120) (Triticum aestivum (Wheat)).